A 278-amino-acid polypeptide reads, in one-letter code: Lectin 6 (278 aa).

A signal peptide spans 1–23 (MTLSSALIKIFITFLFLQNHVNS). N116, N139, and N271 each carry an N-linked (GlcNAc...) asparagine glycan.

This sequence belongs to the leguminous lectin family.

In terms of biological role, may be involved in arbuscular mycorrhizal (AM) symbiosis with AM fungi. This Medicago truncatula (Barrel medic) protein is Lectin 6.